The sequence spans 200 residues: Large ribosomal subunit protein uL4 (200 aa).

The segment at 44–70 (AQKTRAEVTGSGKKPWRQKGTGRARSG) is disordered.

Belongs to the universal ribosomal protein uL4 family. In terms of assembly, part of the 50S ribosomal subunit.

One of the primary rRNA binding proteins, this protein initially binds near the 5'-end of the 23S rRNA. It is important during the early stages of 50S assembly. It makes multiple contacts with different domains of the 23S rRNA in the assembled 50S subunit and ribosome. Functionally, protein L4 is a both a transcriptional repressor and a translational repressor protein. It regulates transcription of the S10 operon (to which L4 belongs) by causing premature termination of transcription within the S10 leader. L4 controls the translation of the S10 operon by binding to its mRNA. In terms of biological role, this protein when expressed in E.coli represses both transcription and translation of the endogenous S10 operon. As the M.morganii S10 leader can be regulated in vitro by the E.coli L4 protein this strongly suggests the endogenous protein controls its own S10 operon in a similar fashion. Its function is as follows. Forms part of the polypeptide exit tunnel. The polypeptide is Large ribosomal subunit protein uL4 (rplD) (Morganella morganii (Proteus morganii)).